We begin with the raw amino-acid sequence, 338 residues long: Nuclear hormone receptor family member nhr-52 (338 aa).

A DNA-binding region (nuclear receptor) is located at residues 1 to 75; the sequence is MKCLVCCSYA…IGMRFSEPKQ (75 aa). 2 consecutive NR C4-type zinc fingers follow at residues 3 to 23 and 39 to 63; these read CLVC…CSAC and CKYD…FKKC. One can recognise an NR LBD domain in the interval 98 to 337; that stretch reads KDGVHYSNFL…KKLVNDIIIR (240 aa).

It belongs to the nuclear hormone receptor family.

It is found in the nucleus. Its function is as follows. Orphan nuclear receptor. This chain is Nuclear hormone receptor family member nhr-52 (nhr-52), found in Caenorhabditis elegans.